The following is a 489-amino-acid chain: MATIFSGGSVSPFLFHTNKGTSFTPKAPILHLKRSFSAKSVASVGTEPSLSPAVQTFWKWLQEEGVITAKTPVKASVVTEGLGLVALKDISRNDVILQVPKRLWINPDAVAASEIGRVCSELKPWLSVILFLIRERSREDSVWKHYFGILPQETDSTIYWSEEELQELQGSQLLKTTVSVKEYVKNECLKLEQEIILPNKRLFPDPVTLDDFFWAFGILRSRAFSRLRNENLVVVPMADLINHSAGVTTEDHAYEVKGAAGLFSWDYLFSLKSPLSVKAGEQVYIQYDLNKSNAELALDYGFIEPNENRHAYTLTLEISESDPFFDDKLDVAESNGFAQTAYFDIFYNRTLPPGLLPYLRLVALGGTDAFLLESLFRDTIWGHLELSVSRDNEELLCKAVREACKSALAGYHTTIEQDRELKEGNLDSRLAIAVGIREGEKMVLQQIDGIFEQKELELDQLEYYQERRLKDLGLCGENGDILGDLGKFF.

Residues 1 to 37 (MATIFSGGSVSPFLFHTNKGTSFTPKAPILHLKRSFS) constitute a chloroplast transit peptide. Residues 64–288 (EGVITAKTPV…AGEQVYIQYD (225 aa)) enclose the SET domain. S-adenosyl-L-methionine-binding positions include 80–82 (EGL) and Arg-222. 3 residues coordinate substrate: Arg-222, Arg-226, and Asp-239. 242–243 (NH) is an S-adenosyl-L-methionine binding site. Substrate is bound by residues Tyr-254, Tyr-287, and Tyr-300.

This sequence belongs to the class V-like SAM-binding methyltransferase superfamily. Plant protein-lysine LSMT methyltransferase family. As to quaternary structure, homotrimer. Highly expressed in leaf.

It localises to the plastid. The protein localises to the chloroplast. It catalyses the reaction L-lysyl-[ribulose-1,5-bisphosphate carboxylase] + 3 S-adenosyl-L-methionine = N(6),N(6),N(6)-trimethyl-L-lysyl-[ribulose-1,5-bisphosphate carboxylase] + 3 S-adenosyl-L-homocysteine + 3 H(+). It carries out the reaction [fructose-bisphosphate aldolase]-L-lysine + 3 S-adenosyl-L-methionine = [fructose-bisphosphate aldolase]-N(6),N(6),N(6)-trimethyl-L-lysine + 3 S-adenosyl-L-homocysteine + 3 H(+). Methylates 'Lys-14' of the large subunit of RuBisCO. Can also use with lower efficiency chloroplastic fructose-bisphosphate aldolases and gamma-tocopherol methyltransferase as substrates, but not a cytosolic aldolase. This Pisum sativum (Garden pea) protein is Ribulose-1,5 bisphosphate carboxylase/oxygenase large subunit N-methyltransferase, chloroplastic (RBCMT).